The sequence spans 206 residues: ATP phosphoribosyltransferase (206 aa).

The protein belongs to the ATP phosphoribosyltransferase family. Short subfamily. As to quaternary structure, heteromultimer composed of HisG and HisZ subunits.

The protein resides in the cytoplasm. The catalysed reaction is 1-(5-phospho-beta-D-ribosyl)-ATP + diphosphate = 5-phospho-alpha-D-ribose 1-diphosphate + ATP. It participates in amino-acid biosynthesis; L-histidine biosynthesis; L-histidine from 5-phospho-alpha-D-ribose 1-diphosphate: step 1/9. Catalyzes the condensation of ATP and 5-phosphoribose 1-diphosphate to form N'-(5'-phosphoribosyl)-ATP (PR-ATP). Has a crucial role in the pathway because the rate of histidine biosynthesis seems to be controlled primarily by regulation of HisG enzymatic activity. In Sulfurovum sp. (strain NBC37-1), this protein is ATP phosphoribosyltransferase.